A 62-amino-acid chain; its full sequence is Protein sigN176 (62 aa).

This chain is Protein sigN176, found in Dictyostelium discoideum (Social amoeba).